A 333-amino-acid polypeptide reads, in one-letter code: Tumor necrosis factor receptor superfamily member 6 (333 aa).

A signal peptide spans 1–25 (MLGIWTLLPLVLTSVVRLLSKCVNA). The Extracellular portion of the chain corresponds to 26 to 173 (QVTDISSKGF…KCKEEDSRSD (148 aa)). TNFR-Cys repeat units follow at residues 47 to 83 (QNLE…PDCV), 84 to 127 (PCQE…NTKC), and 128 to 166 (RCKP…TKCK). 8 disulfides stabilise this stretch: Cys-59/Cys-73, Cys-63/Cys-82, Cys-85/Cys-101, Cys-104/Cys-119, Cys-107/Cys-127, Cys-129/Cys-143, Cys-146/Cys-157, and Cys-149/Cys-165. N-linked (GlcNAc...) asparagine glycosylation occurs at Asn-118. A helical membrane pass occupies residues 174–194 (LLWLCLLLLLLLIPPIVYVVI). Over 195–333 (KEPCRKRRKE…NFGNEVQNLV (139 aa)) the chain is Cytoplasmic. A lipid anchor (S-palmitoyl cysteine) is attached at Cys-198. The segment at 211 to 315 (STTLNPETAI…EKIHAVILKD (105 aa)) is interaction with HIPK3. The residue at position 213 (Thr-213) is a Phosphothreonine. Phosphoserine is present on Ser-223. The segment at 228–252 (SKYITTIAGAMTLSQVKDFVRKNGV) is interaction with CALM. The region spanning 228–312 (SKYITTIAGA…TLAEKIHAVI (85 aa)) is the Death domain. Thr-320 carries the phosphothreonine modification.

Component of the death-induced signaling complex (DISC) composed of cell surface receptor FAS/CD95, adapter protein FADD and the CASP8 protease; recruitment of CASP8 to the complex is required for processing of CASP8 into the p18 and p10 subunits. Interacts directly (via DED domain) with NOL3 (via CARD domain); inhibits death-inducing signaling complex (DISC) assembly by inhibiting the increase in FAS-FADD binding induced by FAS activation. Binds DAXX. Interacts with HIPK3. Part of a complex containing HIPK3 and FADD. Binds RIPK1 and FAIM2. Interacts with BABAM2 and FEM1B. Interacts with CALM. In the absence of stimulation, interacts with BIRC2, DDX3X and GSK3B. The interaction with BIRC2 and DDX3X is further enhanced upon receptor stimulation and accompanied by DDX3X and BIRC2 cleavage. Post-translationally, palmitoylated. Palmitoylation by ZDHHC7 prevents the lysosomal degradation of FAS regulating its expression at the plasma membrane.

The protein localises to the cell membrane. It is found in the membrane raft. Its function is as follows. Receptor for TNFSF6/FASLG. The adapter molecule FADD recruits caspase CASP8 to the activated receptor. The resulting death-inducing signaling complex (DISC) performs CASP8 proteolytic activation which initiates the subsequent cascade of caspases (aspartate-specific cysteine proteases) mediating apoptosis. FAS-mediated apoptosis may have a role in the induction of peripheral tolerance, in the antigen-stimulated suicide of mature T-cells, or both. The polypeptide is Tumor necrosis factor receptor superfamily member 6 (FAS) (Macaca mulatta (Rhesus macaque)).